The primary structure comprises 291 residues: Bifunctional protein FolD (291 aa).

NADP(+) contacts are provided by residues 168-170 (GRG), threonine 195, and isoleucine 236.

Belongs to the tetrahydrofolate dehydrogenase/cyclohydrolase family. In terms of assembly, homodimer.

The enzyme catalyses (6R)-5,10-methylene-5,6,7,8-tetrahydrofolate + NADP(+) = (6R)-5,10-methenyltetrahydrofolate + NADPH. The catalysed reaction is (6R)-5,10-methenyltetrahydrofolate + H2O = (6R)-10-formyltetrahydrofolate + H(+). It functions in the pathway one-carbon metabolism; tetrahydrofolate interconversion. Its function is as follows. Catalyzes the oxidation of 5,10-methylenetetrahydrofolate to 5,10-methenyltetrahydrofolate and then the hydrolysis of 5,10-methenyltetrahydrofolate to 10-formyltetrahydrofolate. In Bifidobacterium longum subsp. infantis (strain ATCC 15697 / DSM 20088 / JCM 1222 / NCTC 11817 / S12), this protein is Bifunctional protein FolD.